Here is a 1002-residue protein sequence, read N- to C-terminus: Copper-transporting ATPase HMA5 (1002 aa).

Residues 32–48 (RPRYPSMPRRPRSAAVA) are compositionally biased toward low complexity. The segment at 32 to 63 (RPRYPSMPRRPRSAAVAGEGGEGGGGGGDGDL) is disordered. Gly residues predominate over residues 49-60 (GEGGEGGGGGGD). 3 consecutive HMA domains span residues 75-141 (KVAV…FEAK), 153-219 (LVCR…FEAI), and 228-294 (SRID…SGDL). C86, C89, C164, and C167 together coordinate Cu(+). A run of 8 helical transmembrane segments spans residues 320–340 (FLWS…FMYI), 354–374 (MMSI…FVIG), 392–412 (MDVL…YSIL), 425–445 (FFET…LEIL), 585–605 (VFVP…FLAG), 624–644 (LALQ…LGLA), 943–963 (YVWA…VLFP), and 972–992 (WVAG…SLLL).

This sequence belongs to the cation transport ATPase (P-type) (TC 3.A.3) family. Type IB subfamily. In terms of tissue distribution, expressed in root pericycle cells, xylem region of diffuse vascular bundles in the first node, and vascular tissues of peduncle, rachis and husk.

Its subcellular location is the cell membrane. The catalysed reaction is Cu(+)(in) + ATP + H2O = Cu(+)(out) + ADP + phosphate + H(+). Functionally, copper (Cu) transporter that plays an essential role in promoting translocation of Cu from roots to shoots. Involved in loading Cu to the xylem of the roots and other organs, including panicles. The chain is Copper-transporting ATPase HMA5 from Oryza sativa subsp. japonica (Rice).